The following is a 692-amino-acid chain: Meiotic sister-chromatid recombination protein 6, mitochondrial (692 aa).

The N-terminal 30 residues, Met-1–Gln-30, are a transit peptide targeting the mitochondrion.

The protein resides in the mitochondrion. In terms of biological role, may be involved in the control of meiotic sister-chromatid recombination. This is Meiotic sister-chromatid recombination protein 6, mitochondrial (MSC6) from Saccharomyces cerevisiae (strain ATCC 204508 / S288c) (Baker's yeast).